The primary structure comprises 930 residues: Nonribosomal peptide synthetase acyN (930 aa).

The tract at residues 15–436 (LDPQDNKISV…AGRAKETIIV (422 aa)) is adenylation (A) domain. In terms of domain architecture, Carrier spans 567–646 (APSNETEATI…GLAGTLETLM (80 aa)). O-(pantetheine 4'-phosphoryl)serine is present on Ser604. Positions 665-914 (PLWLVHPGVG…HYTMLGPDNI (250 aa)) are thioesterase (TE) domain.

The protein belongs to the NRP synthetase family.

It carries out the reaction 2 3-phenylpyruvate + 2 ATP = polyporic acid + 2 AMP + 2 diphosphate + H(+). Its pathway is secondary metabolite biosynthesis. Its activity is regulated as follows. Hydroxyphenylpyruvate acts more like a competitive inhibitor rather than a substrate. Nonribosomal peptide synthetase that mediates the biosynthesis of polyporic acid via the condensation of 2 phenylpyruvate units. Polyporic acid is further hydroxylaed by the cytochrome P450 monooxygenase MO6277 into less toxic ascocorynin. The protein is Nonribosomal peptide synthetase acyN of Ascocoryne sarcoides (Purple jellydisc fungus).